A 360-amino-acid chain; its full sequence is Abhydrolase domain-containing protein lid-1 (360 aa).

Positions 73 to 203 (AIVFIPGLGA…MSFLGGVAGY (131 aa)) constitute an AB hydrolase-1 domain.

It belongs to the peptidase S33 family. ABHD4/ABHD5 subfamily. Interacts with atgl-1.

The protein resides in the lipid droplet. Its function is as follows. Acts coordinately with atgl-1 within the lipolytic cascade to distribute stored energy to tissues during nutritional deprivation. This chain is Abhydrolase domain-containing protein lid-1, found in Caenorhabditis elegans.